The following is a 365-amino-acid chain: Alanine racemase (365 aa).

The active-site Proton acceptor; specific for D-alanine is the lysine 35. Lysine 35 is subject to N6-(pyridoxal phosphate)lysine. A substrate-binding site is contributed by arginine 130. Residue tyrosine 256 is the Proton acceptor; specific for L-alanine of the active site. Residue methionine 304 coordinates substrate.

It belongs to the alanine racemase family. The cofactor is pyridoxal 5'-phosphate.

It catalyses the reaction L-alanine = D-alanine. Its pathway is amino-acid biosynthesis; D-alanine biosynthesis; D-alanine from L-alanine: step 1/1. Functionally, catalyzes the interconversion of L-alanine and D-alanine. May also act on other amino acids. The chain is Alanine racemase (alr) from Acidovorax ebreus (strain TPSY) (Diaphorobacter sp. (strain TPSY)).